We begin with the raw amino-acid sequence, 149 residues long: Transcriptional repressor NrdR (149 aa).

A zinc finger spans residues 3–34; it reads CPFCSHQETQVVETRVSEDGDFIRRRRQCGAC. Residues 49 to 139 enclose the ATP-cone domain; it reads PTVVKKDGRR…VYRSFEDIDE (91 aa).

Belongs to the NrdR family. Zn(2+) is required as a cofactor.

Its function is as follows. Negatively regulates transcription of bacterial ribonucleotide reductase nrd genes and operons by binding to NrdR-boxes. The sequence is that of Transcriptional repressor NrdR from Acidovorax sp. (strain JS42).